The primary structure comprises 195 residues: L-rhamnose-binding lectin CSL3 (195 aa).

SUEL-type lectin domains follow at residues 1 to 95 (AISI…YSCV) and 105 to 195 (ICEG…YTCD).

Functionally, L-rhamnose binding lectin. Has hemagglutinating activity towards rabbit erythrocytes, human type A erythrocytes, human type B erythrocytes, human type O erythrocytes and sheep erythrocytes. Hemagglutinating activity is inhibited by smooth-type lipopolysaccharide (LPS) from S.flexneri 1A, A.salmonicida and E.coli K12, but not by rough-type LPS from S.flexneri, E.coli K12 and E.coli EH100. Agglutinates E.coli K12 and B.subtilis. This is L-rhamnose-binding lectin CSL3 from Oncorhynchus keta (Chum salmon).